Reading from the N-terminus, the 1143-residue chain is DNA-directed RNA polymerase subunit beta (1143 aa).

It belongs to the RNA polymerase beta chain family. In terms of assembly, in plastids the minimal PEP RNA polymerase catalytic core is composed of four subunits: alpha, beta, beta', and beta''. When a (nuclear-encoded) sigma factor is associated with the core the holoenzyme is formed, which can initiate transcription.

The protein resides in the plastid. Its subcellular location is the chloroplast. It catalyses the reaction RNA(n) + a ribonucleoside 5'-triphosphate = RNA(n+1) + diphosphate. DNA-dependent RNA polymerase catalyzes the transcription of DNA into RNA using the four ribonucleoside triphosphates as substrates. The sequence is that of DNA-directed RNA polymerase subunit beta from Pyropia yezoensis (Susabi-nori).